Consider the following 255-residue polypeptide: Ribonuclease HII (255 aa).

Positions 72–255 (AIICGIDEVG…KSFEPIKSLL (184 aa)) constitute an RNase H type-2 domain. 3 residues coordinate a divalent metal cation: D78, E79, and D170.

Belongs to the RNase HII family. Mn(2+) serves as cofactor. Requires Mg(2+) as cofactor.

It is found in the cytoplasm. The enzyme catalyses Endonucleolytic cleavage to 5'-phosphomonoester.. Its function is as follows. Endonuclease that specifically degrades the RNA of RNA-DNA hybrids. In Staphylococcus aureus (strain USA300), this protein is Ribonuclease HII.